We begin with the raw amino-acid sequence, 155 residues long: Putative pre-16S rRNA nuclease (155 aa).

The protein belongs to the YqgF nuclease family.

The protein resides in the cytoplasm. Its function is as follows. Could be a nuclease involved in processing of the 5'-end of pre-16S rRNA. In Corynebacterium jeikeium (strain K411), this protein is Putative pre-16S rRNA nuclease.